A 174-amino-acid polypeptide reads, in one-letter code: Extracellular cysteine protease (174 aa).

Residues C24, H120, and N141 contribute to the active site.

Belongs to the peptidase C47 family. In terms of processing, proteolytically cleaved.

The protein localises to the secreted. It is found in the cell wall. With respect to regulation, inhibited by heavy metal ions such as Zn(2+) or Ni(2+), iodoacetamide, N-ethylmaleimide, leupeptin, SDS and E-64. Also inhibited by chloromethylketones TPCK and TLCK and by human plasma inhibitor alpha-2-macroglobulin. Stimulated by L-cysteine. Functionally, cysteine protease able to cleave elastin, insulin, myoglobin, fibronectin, fibrinogen, HMW-kininogen, alpha-1-protease inhibitor and alpha-1-antitrypsin. Along with other extracellular proteases may contribute to the colonization and infection of human tissues. The chain is Extracellular cysteine protease (ecpA) from Staphylococcus epidermidis.